A 303-amino-acid polypeptide reads, in one-letter code: Pyridoxal 5'-phosphate synthase subunit PdxS (303 aa).

Asp-33 is a D-ribose 5-phosphate binding site. Lys-90 serves as the catalytic Schiff-base intermediate with D-ribose 5-phosphate. Gly-162 serves as a coordination point for D-ribose 5-phosphate. Arg-174 serves as a coordination point for D-glyceraldehyde 3-phosphate. Residues Gly-223 and 244 to 245 (GS) each bind D-ribose 5-phosphate.

Belongs to the PdxS/SNZ family. In the presence of PdxT, forms a dodecamer of heterodimers.

It carries out the reaction aldehydo-D-ribose 5-phosphate + D-glyceraldehyde 3-phosphate + L-glutamine = pyridoxal 5'-phosphate + L-glutamate + phosphate + 3 H2O + H(+). Its pathway is cofactor biosynthesis; pyridoxal 5'-phosphate biosynthesis. Catalyzes the formation of pyridoxal 5'-phosphate from ribose 5-phosphate (RBP), glyceraldehyde 3-phosphate (G3P) and ammonia. The ammonia is provided by the PdxT subunit. Can also use ribulose 5-phosphate and dihydroxyacetone phosphate as substrates, resulting from enzyme-catalyzed isomerization of RBP and G3P, respectively. In Streptomyces coelicolor (strain ATCC BAA-471 / A3(2) / M145), this protein is Pyridoxal 5'-phosphate synthase subunit PdxS.